A 294-amino-acid chain; its full sequence is Major pollen allergen Pha a 5.3 (294 aa).

The first 25 residues, 1–25, serve as a signal peptide directing secretion; sequence MAVQKYTVALFLAMALVAGPAASYA.

This sequence belongs to the Poa p IX/Phl p VI allergen family.

In Phalaris aquatica (Canary grass), this protein is Major pollen allergen Pha a 5.3.